The chain runs to 144 residues: Maximins 7/H13 (144 aa).

A signal peptide spans methionine 1 to alanine 18. Residues arginine 19–arginine 43 constitute a propeptide that is removed on maturation. Asparagine 70 carries the post-translational modification Asparagine amide. The propeptide occupies threonine 74–arginine 123. Leucine amide is present on leucine 143.

It belongs to the bombinin family. In terms of tissue distribution, expressed by the skin glands.

The protein localises to the secreted. In terms of biological role, maximin-7 shows antimicrobial activity against bacteria and against the fungus C.albicans. It has little hemolytic activity. Its function is as follows. Maximin-H13 shows antimicrobial activity against bacteria and against the fungus C.albicans. Shows strong hemolytic activity. The protein is Maximins 7/H13 of Bombina maxima (Giant fire-bellied toad).